The sequence spans 323 residues: Cell division protein ZipA (323 aa).

The Periplasmic segment spans residues 1-5 (MQELR). Residues 6–26 (FVLIVVGALAIAALLFHGLWT) traverse the membrane as a helical segment. At 27–323 (SKKEGKAKFG…QIVEFNAANA (297 aa)) the chain is on the cytoplasmic side. The tract at residues 35–92 (FGNKPLGKLDVDQEDKDTPGQERDFAPDPEDDFEIIRKDRKEPDFGMENSFDNKFSSD) is disordered. 2 stretches are compositionally biased toward basic and acidic residues: residues 41–60 (GKLD…RDFA) and 68–78 (EIIRKDRKEPD).

It belongs to the ZipA family. As to quaternary structure, interacts with FtsZ via their C-terminal domains.

It localises to the cell inner membrane. Essential cell division protein that stabilizes the FtsZ protofilaments by cross-linking them and that serves as a cytoplasmic membrane anchor for the Z ring. Also required for the recruitment to the septal ring of downstream cell division proteins. The polypeptide is Cell division protein ZipA (Vibrio campbellii (strain ATCC BAA-1116)).